The primary structure comprises 152 residues: Protein SprT-like (152 aa).

Residues 7-148 (QRLVEEVSLQ…GKCKGKLNLI (142 aa)) enclose the SprT-like domain. Residue His67 participates in Zn(2+) binding. The active site involves Glu68. Zn(2+) is bound at residue His71.

This sequence belongs to the SprT family. It depends on Zn(2+) as a cofactor.

Its subcellular location is the cytoplasm. This chain is Protein SprT-like, found in Bacillus anthracis (strain A0248).